The chain runs to 290 residues: 33 kDa chaperonin (290 aa).

2 cysteine pairs are disulfide-bonded: C231–C233 and C263–C266.

It belongs to the HSP33 family. In terms of processing, under oxidizing conditions two disulfide bonds are formed involving the reactive cysteines. Under reducing conditions zinc is bound to the reactive cysteines and the protein is inactive.

Its subcellular location is the cytoplasm. Redox regulated molecular chaperone. Protects both thermally unfolding and oxidatively damaged proteins from irreversible aggregation. Plays an important role in the bacterial defense system toward oxidative stress. In Thermotoga maritima (strain ATCC 43589 / DSM 3109 / JCM 10099 / NBRC 100826 / MSB8), this protein is 33 kDa chaperonin.